The sequence spans 206 residues: Ribosomal RNA small subunit methyltransferase G (206 aa).

Residues Gly-73, Leu-78, 124–125, and Arg-139 contribute to the S-adenosyl-L-methionine site; that span reads VE.

Belongs to the methyltransferase superfamily. RNA methyltransferase RsmG family.

Its subcellular location is the cytoplasm. It catalyses the reaction guanosine(527) in 16S rRNA + S-adenosyl-L-methionine = N(7)-methylguanosine(527) in 16S rRNA + S-adenosyl-L-homocysteine. Its function is as follows. Specifically methylates the N7 position of guanine in position 527 of 16S rRNA. The sequence is that of Ribosomal RNA small subunit methyltransferase G from Yersinia enterocolitica serotype O:8 / biotype 1B (strain NCTC 13174 / 8081).